We begin with the raw amino-acid sequence, 127 residues long: Large ribosomal subunit protein bL12 (127 aa).

The segment at 94–114 (VDGAPSTLKEAASKEEAEEAK) is disordered. Over residues 104–114 (AASKEEAEEAK) the composition is skewed to basic and acidic residues.

This sequence belongs to the bacterial ribosomal protein bL12 family. Homodimer. Part of the ribosomal stalk of the 50S ribosomal subunit. Forms a multimeric L10(L12)X complex, where L10 forms an elongated spine to which 2 to 4 L12 dimers bind in a sequential fashion. Binds GTP-bound translation factors.

Forms part of the ribosomal stalk which helps the ribosome interact with GTP-bound translation factors. Is thus essential for accurate translation. This is Large ribosomal subunit protein bL12 from Nitratidesulfovibrio vulgaris (strain ATCC 29579 / DSM 644 / CCUG 34227 / NCIMB 8303 / VKM B-1760 / Hildenborough) (Desulfovibrio vulgaris).